A 535-amino-acid polypeptide reads, in one-letter code: Dimethylaniline monooxygenase [N-oxide-forming] 2 (535 aa).

Ala-2 is modified (N-acetylalanine). FAD is bound by residues 9 to 13, Glu-32, 40 to 41, and 61 to 62; these read GAGVS, VW, and NT. Residues 60-61 and 195-198 contribute to the NADP(+) site; these read TN and SGSD. Lys-492 is covalently cross-linked (Glycyl lysine isopeptide (Lys-Gly) (interchain with G-Cter in SUMO)). The chain crosses the membrane as a helical span at residues 510–530; the sequence is FPVSFLLKILGLVAVVVAFFC.

It belongs to the FMO family. The cofactor is FAD. It depends on Mg(2+) as a cofactor.

It is found in the microsome membrane. Its subcellular location is the endoplasmic reticulum membrane. It carries out the reaction N,N-dimethylaniline + NADPH + O2 + H(+) = N,N-dimethylaniline N-oxide + NADP(+) + H2O. Catalyzes the oxidative metabolism of numerous xenobiotics, including mainly therapeutic drugs and insecticides that contain a soft nucleophile, most commonly nitrogen and sulfur and participates to their bioactivation. This chain is Dimethylaniline monooxygenase [N-oxide-forming] 2, found in Macaca mulatta (Rhesus macaque).